Here is a 464-residue protein sequence, read N- to C-terminus: UDP-N-acetylmuramoylalanine--D-glutamate ligase (464 aa).

ATP is bound at residue G127–T133.

Belongs to the MurCDEF family.

The protein resides in the cytoplasm. It carries out the reaction UDP-N-acetyl-alpha-D-muramoyl-L-alanine + D-glutamate + ATP = UDP-N-acetyl-alpha-D-muramoyl-L-alanyl-D-glutamate + ADP + phosphate + H(+). It participates in cell wall biogenesis; peptidoglycan biosynthesis. Its function is as follows. Cell wall formation. Catalyzes the addition of glutamate to the nucleotide precursor UDP-N-acetylmuramoyl-L-alanine (UMA). The chain is UDP-N-acetylmuramoylalanine--D-glutamate ligase from Dinoroseobacter shibae (strain DSM 16493 / NCIMB 14021 / DFL 12).